Reading from the N-terminus, the 375-residue chain is AA9 family lytic polysaccharide monooxygenase CEL1 (375 aa).

The N-terminal stretch at 1-16 is a signal peptide; sequence MLFPALALLCPVLVAA. Histidine 119 provides a ligand contact to Cu(2+). Cysteine 130 and cysteine 135 are oxidised to a cystine. Asparagine 132 carries N-linked (GlcNAc...) asparagine glycosylation. Histidine 196 is a binding site for O2. Asparagine 197 carries an N-linked (GlcNAc...) asparagine glycan. Tyrosine 212 lines the Cu(2+) pocket. A disulfide bridge connects residues cysteine 232 and cysteine 237. The tract at residues 287 to 375 is disordered; it reads NGMSSSPSSS…RSRVAHLDRH (89 aa). Positions 290–341 are enriched in low complexity; sequence SSSPSSSSGVSSSSSSSVASSDTSDSTTSSGVVAVNVSAASSPSSSISANSA. Asparagine 325 carries N-linked (GlcNAc...) asparagine glycosylation. Basic residues predominate over residues 347–369; the sequence is KTCKRKKRSKIAGQKRHIHRSRV.

The protein belongs to the polysaccharide monooxygenase AA9 family. Cu(2+) is required as a cofactor.

The protein resides in the secreted. It is found in the cell wall. It carries out the reaction [(1-&gt;4)-beta-D-glucosyl]n+m + reduced acceptor + O2 = 4-dehydro-beta-D-glucosyl-[(1-&gt;4)-beta-D-glucosyl]n-1 + [(1-&gt;4)-beta-D-glucosyl]m + acceptor + H2O.. Its function is as follows. Lytic polysaccharide monooxygenase (LPMO) that depolymerizes polysaccharides via the oxidation of scissile alpha- or beta-(1-4)-glycosidic bonds, yielding C4 oxidation products. Catalysis by LPMOs requires the reduction of the active-site copper from Cu(II) to Cu(I) by a reducing agent and H(2)O(2) or O(2) as a cosubstrate. Required for the expression of stress response phenotypes, including thermotolerance, cell wall integrity, and efficient cell cycle progression. Promotes intrinsic fungal cell wall remodeling events required for efficient adaptation to the host environment. Required for virulence in a murine inhalational model of cryptococcal infection as well as in Galleria mellonella larvae. This Cryptococcus neoformans var. grubii serotype A (strain H99 / ATCC 208821 / CBS 10515 / FGSC 9487) (Filobasidiella neoformans var. grubii) protein is AA9 family lytic polysaccharide monooxygenase CEL1.